Reading from the N-terminus, the 129-residue chain is Large ribosomal subunit protein bL12c (129 aa).

The protein belongs to the bacterial ribosomal protein bL12 family. In terms of assembly, homodimer. Part of the ribosomal stalk of the 50S ribosomal subunit. Forms a multimeric L10(L12)X complex, where L10 forms an elongated spine to which 2 to 4 L12 dimers bind in a sequential fashion. Binds GTP-bound translation factors.

The protein resides in the plastid. It localises to the chloroplast. Its function is as follows. Forms part of the ribosomal stalk which helps the ribosome interact with GTP-bound translation factors. Is thus essential for accurate translation. The chain is Large ribosomal subunit protein bL12c from Tupiella akineta (Green alga).